Reading from the N-terminus, the 291-residue chain is Popeye domain-containing protein 3 (291 aa).

N-linked (GlcNAc...) asparagine glycosylation occurs at Asn4. The next 3 helical transmembrane spans lie at 27 to 44, 48 to 70, and 77 to 99; these read GAIYHLASILFVVGFMGG, FGLLYVFSLLGLGFLSSAVWAWV, and IFSWNFVLFVICFMQFVHIAYQV.

This sequence belongs to the popeye family. In terms of tissue distribution, expressed in cardiac and skeletal muscle.

It localises to the membrane. Its function is as follows. May play a role in the maintenance of heart function mediated, at least in part, through cAMP-binding. May play a role in the regulation of KCNK2-mediated current amplitude. The sequence is that of Popeye domain-containing protein 3 (Popdc3) from Mus musculus (Mouse).